The primary structure comprises 304 residues: Phosphonates import ATP-binding protein PhnC 1 (304 aa).

An ABC transporter domain is found at 4 to 240 (VSLQNVTKLF…VIDDLYYAGS (237 aa)). An ATP-binding site is contributed by 37–44 (GPSGAGKS). Residues 240 to 304 (SESTPVSHGD…TETDTGEAQL (65 aa)) form a disordered region. Over residues 263 to 272 (TSVSSDMETT) the composition is skewed to polar residues. Positions 289 to 304 (TDTETDTETDTGEAQL) are enriched in acidic residues.

This sequence belongs to the ABC transporter superfamily. Phosphonates importer (TC 3.A.1.9.1) family. The complex is composed of two ATP-binding proteins (PhnC), two transmembrane proteins (PhnE) and a solute-binding protein (PhnD).

It is found in the cell membrane. The enzyme catalyses phosphonate(out) + ATP + H2O = phosphonate(in) + ADP + phosphate + H(+). Functionally, part of the ABC transporter complex PhnCDE involved in phosphonates import. Responsible for energy coupling to the transport system. This chain is Phosphonates import ATP-binding protein PhnC 1, found in Haloquadratum walsbyi (strain DSM 16790 / HBSQ001).